The following is a 161-amino-acid chain: EP300-interacting inhibitor of differentiation 2B (161 aa).

Disordered stretches follow at residues 1–26 (MAEPTGLLEMSELPGDSSVPQVGTAS) and 54–77 (ARSMARMPGPVPGPIPSSVPGLAS).

As to quaternary structure, homodimer and heterodimer with EID2. Interacts with HDAC1 and HDAC2.

The protein localises to the nucleus. Its function is as follows. Acts as a repressor of MYOD-dependent transcription, glucocorticoid receptor-dependent transcription, and muscle differentiation. The protein is EP300-interacting inhibitor of differentiation 2B of Homo sapiens (Human).